The primary structure comprises 372 residues: Serine/threonine-protein kinase 17B (372 aa).

In terms of domain architecture, Protein kinase spans 33–293 (ILTSKELGRG…AEICLSHSWL (261 aa)). ATP-binding positions include 39–47 (LGRGKFAVV) and lysine 62. Aspartate 158 acts as the Proton acceptor in catalysis. Positions 305 to 362 (EETSSSSQTQDHSVRSSEDKTSKSSCNGTCGDREDKENIPEDSSMVSKRFRFDDSLPN) are disordered. Residues 316–326 (HSVRSSEDKTS) are compositionally biased toward basic and acidic residues.

It belongs to the protein kinase superfamily. CAMK Ser/Thr protein kinase family. DAP kinase subfamily. In terms of assembly, interacts with CHP1; the interaction induces CHP1 to translocate from the Golgi to the nucleus. Autophosphorylated. As to expression, highly expressed in placenta, lung, pancreas. Lower levels in heart, brain, liver, skeletal muscle and kidney.

It localises to the nucleus. Its subcellular location is the cell membrane. It is found in the endoplasmic reticulum-Golgi intermediate compartment. It catalyses the reaction L-seryl-[protein] + ATP = O-phospho-L-seryl-[protein] + ADP + H(+). The enzyme catalyses L-threonyl-[protein] + ATP = O-phospho-L-threonyl-[protein] + ADP + H(+). In terms of biological role, phosphorylates myosin light chains. Acts as a positive regulator of apoptosis. The sequence is that of Serine/threonine-protein kinase 17B (STK17B) from Homo sapiens (Human).